The primary structure comprises 426 residues: Putative acid phosphatase 1 (426 aa).

The signal sequence occupies residues 1–18 (MRVLFYVFPFVIFALSQA). The Extracellular portion of the chain corresponds to 19 to 388 (QLISVHVIFR…HNWTMTTVSW (370 aa)). Histidine 29 serves as the catalytic Nucleophile. N-linked (GlcNAc...) asparagine glycans are attached at residues asparagine 37 and asparagine 145. Cysteine 133 and cysteine 369 are disulfide-bonded. The active-site Proton donor is the aspartate 276. Residue asparagine 380 is glycosylated (N-linked (GlcNAc...) asparagine). A helical membrane pass occupies residues 389–409 (ILIGISAFLLIILIIMSYLAV). Residues 410-426 (RYKNRSVVTIKKVCLEN) lie on the Cytoplasmic side of the membrane.

This sequence belongs to the histidine acid phosphatase family.

It localises to the membrane. It carries out the reaction a phosphate monoester + H2O = an alcohol + phosphate. This Caenorhabditis briggsae protein is Putative acid phosphatase 1.